We begin with the raw amino-acid sequence, 90 residues long: Cell division topological specificity factor (90 aa).

The segment at 1–21 (MAGFWSKLFSSEEKPSSAQTA) is disordered. A compositionally biased stretch (basic and acidic residues) spans 10-21 (SSEEKPSSAQTA).

It belongs to the MinE family.

In terms of biological role, prevents the cell division inhibition by proteins MinC and MinD at internal division sites while permitting inhibition at polar sites. This ensures cell division at the proper site by restricting the formation of a division septum at the midpoint of the long axis of the cell. The chain is Cell division topological specificity factor from Acinetobacter baumannii (strain AB307-0294).